The primary structure comprises 243 residues: Clathrin light chain A (243 aa).

Methionine 1 bears the Blocked amino end (Met) mark. Disordered stretches follow at residues 1–22 (MAELDPFGVPAGGPALGNGVAG) and 49–87 (ILDGGAPGSQPHGEPPGIPDAVDGVTNGDYYQESNGPTD). The segment covering 10-20 (PAGGPALGNGV) has biased composition (gly residues). Residues 95–157 (VDRLQSEPES…QLQKTKANNR (63 aa)) are involved in binding clathrin heavy chain. Residues serine 100 and serine 201 each carry the phosphoserine modification. Position 218 is an N6-acetyllysine (lysine 218). Serine 231 carries the post-translational modification Phosphoserine. An N6-acetyllysine modification is found at lysine 237.

It belongs to the clathrin light chain family. As to quaternary structure, clathrin coats are formed from molecules containing 3 heavy chains and 3 light chains. Interacts with CALY; the interaction stimulates clathrin self-assembly and clathrin-mediated endocytosis. Interacts with CKAP5 and TACC3 forming the TACC3/ch-TOG/clathrin complex located at spindle inter-microtubules bridges; the complex implicates clathrin triskelions.

It localises to the cytoplasmic vesicle membrane. Its subcellular location is the membrane. The protein resides in the coated pit. The protein localises to the cytoplasm. It is found in the cytoskeleton. It localises to the spindle. Clathrin is the major protein of the polyhedral coat of coated pits and vesicles. Acts as a component of the TACC3/ch-TOG/clathrin complex proposed to contribute to stabilization of kinetochore fibers of the mitotic spindle by acting as inter-microtubule bridge. This chain is Clathrin light chain A (CLTA), found in Bos taurus (Bovine).